The primary structure comprises 379 residues: Class V chitinase (379 aa).

The N-terminal stretch at 1–24 (MSSTKLISLIVSITFFLTLQCSMA) is a signal peptide. The GH18 domain maps to 27-369 (VVKASYWFPA…RAASQAWDAT (343 aa)). Gly99 contacts chitin. Glu140 functions as the Proton donor in the catalytic mechanism. A chitin-binding site is contributed by Tyr259. Asn307 and Asn327 each carry an N-linked (GlcNAc...) asparagine glycan. Trp348 contacts chitin.

This sequence belongs to the glycosyl hydrolase 18 family. Chitinase class V subfamily.

It catalyses the reaction Random endo-hydrolysis of N-acetyl-beta-D-glucosaminide (1-&gt;4)-beta-linkages in chitin and chitodextrins.. It carries out the reaction Hydrolysis of N,N'-diacetylchitobiose from the non-reducing end of chitin and chitodextrins.. Its pathway is glycan degradation; chitin degradation. Its function is as follows. Can hydrolyze glycol chitin and chitin oligosaccharides (e.g. N-acetylglucosamine) (GlcNAc)4, (GlcNAc)5 and (GlcNAc)6. Hydrolyzes N-acetylglucosamine oligomers producing dimers from the non-reducing end of the substrates. The protein is Class V chitinase of Arabidopsis thaliana (Mouse-ear cress).